Reading from the N-terminus, the 1585-residue chain is Maestro heat-like repeat-containing protein family member 2B (1585 aa).

HEAT repeat units lie at residues 28 to 65 (VNKE…DMRD), 228 to 263 (GYAL…AAVL), 272 to 309 (LRRS…LAHS), 310 to 346 (NPGE…ADEP), 405 to 445 (TLNR…LVIG), 531 to 569 (IGLL…STVL), 572 to 611 (TMLL…NSTE), 662 to 699 (ENHL…LTKT), 777 to 819 (SYKE…LKPQ), 964 to 1001 (HLEV…KFIP), 1021 to 1059 (PTCT…HMPV), 1112 to 1151 (ASSG…VISM), 1157 to 1195 (GLYP…QGEQ), 1258 to 1295 (GVIL…EPIL), and 1363 to 1402 (CESL…EQDD).

In terms of assembly, found in a complex at least composed of MROH2B, PRKACA isoform 2 and TCP11. Interacts with PRKACA. Interacts with TCP11. In terms of processing, constitutively phosphorylated on serine and threonine residues in acrosomal region of the sperm head, midpiece and flagellar regions of noncapacitated spermatozoa. Phosphorylation on tyrosine residues increases upon sperm capacitation within the acrosomal and tail regions in a protein kinase A (PKA)-dependent signaling pathway.

The protein resides in the cytoplasm. It localises to the cytoplasmic vesicle. The protein localises to the secretory vesicle. Its subcellular location is the acrosome. It is found in the cell projection. The protein resides in the cilium. It localises to the flagellum. Functionally, may play a role in the process of sperm capacitation. The chain is Maestro heat-like repeat-containing protein family member 2B from Homo sapiens (Human).